Consider the following 1011-residue polypeptide: Protein argonaute 1C (1011 aa).

The span at 1–11 (MASRRPTHRHH) shows a compositional bias: basic residues. Disordered stretches follow at residues 1 to 95 (MASR…SPLA) and 107 to 147 (RPSE…PLRP). Composition is skewed to low complexity over residues 28–53 (ARYA…ARGA) and 61–92 (QQQQ…ASSS). Residues 127–140 (ATTTPHHIPSSSKS) are compositionally biased toward polar residues. Positions 352–462 (PVIDFVAQLL…LPMEVCKIVE (111 aa)) constitute a PAZ domain. The Piwi domain maps to 638 to 959 (LLIGILPDNN…AAFRARFYME (322 aa)). Over residues 963–982 (SDSSSVVSGPGVRGPLSGSS) the composition is skewed to low complexity. The segment at 963 to 994 (SDSSSVVSGPGVRGPLSGSSTSRTRAPGGAAV) is disordered.

The protein belongs to the argonaute family. Ago subfamily.

Probably involved in the RNA silencing pathway. May bind to short RNAs such as microRNAs (miRNAs) or short interfering RNAs (siRNAs), and represses the translation of mRNAs which are complementary to them. The protein is Protein argonaute 1C (AGO1C) of Oryza sativa subsp. japonica (Rice).